Reading from the N-terminus, the 279-residue chain is NAD kinase (279 aa).

Asp57 acts as the Proton acceptor in catalysis. NAD(+) is bound by residues 57–58 (DG), 133–134 (NE), Arg159, Asp161, and 172–177 (TAYNKS).

Belongs to the NAD kinase family. The cofactor is a divalent metal cation.

It localises to the cytoplasm. The enzyme catalyses NAD(+) + ATP = ADP + NADP(+) + H(+). Involved in the regulation of the intracellular balance of NAD and NADP, and is a key enzyme in the biosynthesis of NADP. Catalyzes specifically the phosphorylation on 2'-hydroxyl of the adenosine moiety of NAD to yield NADP. The protein is NAD kinase of Streptococcus pyogenes serotype M28 (strain MGAS6180).